The primary structure comprises 359 residues: Alpha-ketoglutarate-dependent dioxygenase cnsM (359 aa).

H120 serves as a coordination point for substrate. Fe cation is bound by residues H158 and D160. Residue T186 coordinates 2-oxoglutarate. H311 is a Fe cation binding site. R323 and R327 together coordinate 2-oxoglutarate. R327 contacts substrate.

The protein belongs to the TfdA dioxygenase family. It depends on Fe(2+) as a cofactor.

It participates in alkaloid biosynthesis. Alpha-ketoglutarate-dependent dioxygenase; part of the gene cluster that mediates the biosynthesis of communesins, a prominent class of indole alkaloids with great potential as pharmaceuticals. Communesins are biosynthesized by the coupling of tryptamine and aurantioclavine, two building blocks derived from L-tryptophan. The L-tryptophan decarboxylase cnsB converts L-tryptophan to tryptamine, whereas the tryptophan dimethylallyltransferase cnsF converts L-tryptophan to 4-dimethylallyl tryptophan which is further transformed to aurantioclavine by the aurantioclavine synthase cnsA, probably aided by the catalase cnsD. The cytochrome P450 monooxygenase cnsC catalyzes the heterodimeric coupling between the two different indole moieties, tryptamine and aurantioclavine, to construct vicinal quaternary stereocenters and yield the heptacyclic communesin scaffold. The O-methyltransferase cnsE then methylates the communesin scaffold to produce communesin K, the simplest characterized communesin that contains the heptacyclic core. The dioxygenase cnsJ converts communesin K into communesin I. Acylation to introduce the hexadienyl group at position N16 of communesin I by the acyltransferase cnsK leads to the production of communesin B. The hexadienyl group is produced by the highly reducing polyketide synthase cnsI, before being hydrolytically removed from cnsI by the serine hydrolase cnsH, converted into hexadienyl-CoA by the CoA ligase cnsG, and then transferred to communesin I by cnsK. Surprisingly, cnsK may also be a promiscuous acyltransferase that can tolerate a range of acyl groups, including acetyl-, propionyl-, and butyryl-CoA, which lead to communesins A, G and H respectively. The roles of the alpha-ketoglutarate-dependent dioxygenases cnsM and cnsP have still to be determined. The sequence is that of Alpha-ketoglutarate-dependent dioxygenase cnsM from Penicillium expansum (Blue mold rot fungus).